The following is a 76-amino-acid chain: Sec-independent protein translocase protein TatA (76 aa).

The chain crosses the membrane as a helical span at residues Met-1–Gly-21. The tract at residues Glu-41–Val-76 is disordered. Positions Ile-64–Val-76 are enriched in basic and acidic residues.

It belongs to the TatA/E family. The Tat system comprises two distinct complexes: a TatABC complex, containing multiple copies of TatA, TatB and TatC subunits, and a separate TatA complex, containing only TatA subunits. Substrates initially bind to the TatABC complex, which probably triggers association of the separate TatA complex to form the active translocon.

It is found in the cell inner membrane. Part of the twin-arginine translocation (Tat) system that transports large folded proteins containing a characteristic twin-arginine motif in their signal peptide across membranes. TatA could form the protein-conducting channel of the Tat system. The sequence is that of Sec-independent protein translocase protein TatA from Nitrosomonas europaea (strain ATCC 19718 / CIP 103999 / KCTC 2705 / NBRC 14298).